A 610-amino-acid polypeptide reads, in one-letter code: Scarecrow-like protein 11 (610 aa).

Disordered stretches follow at residues 32–54 (NNLFPDFHESQNQSSPNDSPPTV), 98–159 (QQSP…RRNK), and 186–220 (QEEEEERTVITKQSTPNRAGRAKGSSNKSKTHKTN). 2 stretches are compositionally biased toward low complexity: residues 41-52 (SQNQSSPNDSPP) and 99-119 (QSPESDQNTSSSSDQNSGDQD). Polar residues-rich tracts occupy residues 123–137 (PSTTTDSSALVSSGE) and 209–220 (GSSNKSKTHKTN). One can recognise a GRAS domain in the interval 215–598 (KTHKTNTVDL…RVIYAFSCWK (384 aa)). Residues 222–283 (VDLRSLLTQC…ARITGNISPP (62 aa)) are leucine repeat I (LRI). A VHIID region spans residues 302–367 (YKLFVHTCPI…GGPPMLRVTG (66 aa)). The VHIID signature appears at 333-337 (LHIVD). Positions 383 to 415 (ETGRRLKRFCDQFNVPFEFNFIAKKWETITLDE) are leucine repeat II (LRII). Positions 424–520 (TVVNCIHRLQ…RELLVRDAMS (97 aa)) are PFYRE. Positions 523–598 (SCEGAERFAR…RVIYAFSCWK (76 aa)) are SAW.

The protein belongs to the GRAS family. Highly expressed in roots and at lower levels in leaves and sepals. Expressed in siliques.

It localises to the nucleus. Its function is as follows. Probable transcription factor involved in plant development. This is Scarecrow-like protein 11 (SCL11) from Arabidopsis thaliana (Mouse-ear cress).